Here is a 152-residue protein sequence, read N- to C-terminus: UPF0266 membrane protein YobD (152 aa).

Residues Met-1–Asp-5 are Periplasmic-facing. A helical membrane pass occupies residues Leu-6–Met-26. The Cytoplasmic portion of the chain corresponds to Pro-27–Arg-44. The chain crosses the membrane as a helical span at residues Ile-45–His-65. Position 66 (Gly-66) is a topological domain, periplasmic. The helical transmembrane segment at Ala-67–Ile-87 threads the bilayer. Over Arg-88–Gln-152 the chain is Cytoplasmic.

Belongs to the UPF0266 family.

It localises to the cell inner membrane. In Salmonella typhi, this protein is UPF0266 membrane protein YobD (yobD).